Consider the following 213-residue polypeptide: UPF0319 protein HAPS_0727 (213 aa).

The signal sequence occupies residues 1 to 21; it reads MKLGKIALAMTALIAGTTAFA.

This sequence belongs to the UPF0319 family.

This Glaesserella parasuis serovar 5 (strain SH0165) (Haemophilus parasuis) protein is UPF0319 protein HAPS_0727.